Here is a 185-residue protein sequence, read N- to C-terminus: Elongation factor P (185 aa).

This sequence belongs to the elongation factor P family.

The protein resides in the cytoplasm. The protein operates within protein biosynthesis; polypeptide chain elongation. Functionally, involved in peptide bond synthesis. Stimulates efficient translation and peptide-bond synthesis on native or reconstituted 70S ribosomes in vitro. Probably functions indirectly by altering the affinity of the ribosome for aminoacyl-tRNA, thus increasing their reactivity as acceptors for peptidyl transferase. This is Elongation factor P from Clostridium perfringens (strain ATCC 13124 / DSM 756 / JCM 1290 / NCIMB 6125 / NCTC 8237 / Type A).